Reading from the N-terminus, the 224-residue chain is PKHD-type hydroxylase Shewmr7_0698 (224 aa).

A Fe2OG dioxygenase domain is found at 78–176 (QFYPPLFNRY…RTAAFMWLQS (99 aa)). 3 residues coordinate Fe cation: His-96, Asp-98, and His-157. Position 167 (Arg-167) interacts with 2-oxoglutarate.

Requires Fe(2+) as cofactor. It depends on L-ascorbate as a cofactor.

This chain is PKHD-type hydroxylase Shewmr7_0698, found in Shewanella sp. (strain MR-7).